A 420-amino-acid polypeptide reads, in one-letter code: Dynein axonemal assembly factor 4 (420 aa).

In terms of domain architecture, CS spans 3 to 87 (LQVSDYSWQQ…KEAAMWETLS (85 aa)). The mediates interaction with ESR1 and STUB1 stretch occupies residues 7–103 (DYSWQQTKTA…EMMQRIREKS (97 aa)). 3 TPR repeats span residues 290 to 323 (PEWL…NNKM), 324 to 357 (PLLY…LMPP), and 366 to 399 (MKAH…DPSN).

As to quaternary structure, interacts with ZMYND10. Interacts with STUB1. Interacts with ESR1 and ESR2. Interacts with DNAAF2. Interacts with CCT3, CCT4, CCT5 and CCT8. Interacts with DNAAF6/PIH1D3.

The protein localises to the nucleus. The protein resides in the cytoplasm. It is found in the cell projection. Its subcellular location is the neuron projection. It localises to the dynein axonemal particle. In terms of biological role, involved in neuronal migration during development of the cerebral neocortex. May regulate the stability and proteasomal degradation of the estrogen receptors that play an important role in neuronal differentiation, survival and plasticity. Axonemal dynein assembly factor required for ciliary motility. In Pan paniscus (Pygmy chimpanzee), this protein is Dynein axonemal assembly factor 4.